Consider the following 532-residue polypeptide: CTP synthase (532 aa).

Positions 1 to 267 (MAKFIFVTGG…QDIIIEQLQL (267 aa)) are amidoligase domain. Ser13 serves as a coordination point for CTP. Ser13 serves as a coordination point for UTP. 14 to 19 (GLGKGI) is a binding site for ATP. Tyr54 contacts L-glutamine. Asp71 contacts ATP. The Mg(2+) site is built by Asp71 and Glu141. CTP contacts are provided by residues 148–150 (DIE), 188–193 (KTKPIQ), and Lys224. Residues 188-193 (KTKPIQ) and Lys224 contribute to the UTP site. Positions 292–532 (EISFVGKYIE…FIKAIIENNK (241 aa)) constitute a Glutamine amidotransferase type-1 domain. An L-glutamine-binding site is contributed by Gly354. Cys381 functions as the Nucleophile; for glutamine hydrolysis in the catalytic mechanism. L-glutamine contacts are provided by residues 382 to 385 (LGMQ), Glu405, and Arg461. Residues His506 and Glu508 contribute to the active site.

Belongs to the CTP synthase family. In terms of assembly, homotetramer.

It carries out the reaction UTP + L-glutamine + ATP + H2O = CTP + L-glutamate + ADP + phosphate + 2 H(+). The enzyme catalyses L-glutamine + H2O = L-glutamate + NH4(+). It catalyses the reaction UTP + NH4(+) + ATP = CTP + ADP + phosphate + 2 H(+). Its pathway is pyrimidine metabolism; CTP biosynthesis via de novo pathway; CTP from UDP: step 2/2. Its activity is regulated as follows. Allosterically activated by GTP, when glutamine is the substrate; GTP has no effect on the reaction when ammonia is the substrate. The allosteric effector GTP functions by stabilizing the protein conformation that binds the tetrahedral intermediate(s) formed during glutamine hydrolysis. Inhibited by the product CTP, via allosteric rather than competitive inhibition. Catalyzes the ATP-dependent amination of UTP to CTP with either L-glutamine or ammonia as the source of nitrogen. Regulates intracellular CTP levels through interactions with the four ribonucleotide triphosphates. The chain is CTP synthase from Mycoplasma capricolum subsp. capricolum (strain California kid / ATCC 27343 / NCTC 10154).